Reading from the N-terminus, the 291-residue chain is Small ribosomal subunit protein uS2 (291 aa).

Positions 256-291 are disordered; sequence STTAPPNWEATGGDWATSTAPAEGWAGDAPAGETKW.

This sequence belongs to the universal ribosomal protein uS2 family. Component of the small ribosomal subunit. Mature ribosomes consist of a small (40S) and a large (60S) subunit. The 40S subunit contains about 33 different proteins and 1 molecule of RNA (18S). The 60S subunit contains about 49 different proteins and 3 molecules of RNA (25S, 5.8S and 5S). Interacts with RPS21.

It is found in the cytoplasm. Its function is as follows. Required for the assembly and/or stability of the 40S ribosomal subunit. Required for the processing of the 20S rRNA-precursor to mature 18S rRNA in a late step of the maturation of 40S ribosomal subunits. In Coccidioides immitis (strain RS) (Valley fever fungus), this protein is Small ribosomal subunit protein uS2.